Here is a 440-residue protein sequence, read N- to C-terminus: Ferredoxin--NADP reductase (440 aa).

The 59-residue stretch at 17–75 (SRVFVYEVVGMRQNEETDQTNYPIRKSGSVFIRVPYNRMNQEMQRITRLGGKIVTIQTV) folds into the CpcD-like domain. Residues 99–142 (KSEGNGKATPVKTDSGAKAFAKPPAEEQLKKKDNKGNTMTQAKA) form a disordered region. The segment covering 122-133 (PAEEQLKKKDNK) has biased composition (basic and acidic residues). The FAD-binding FR-type domain occupies 155–279 (NAPFIGKVIS…TGPVGKEMLL (125 aa)). FAD is bound by residues 214 to 217 (RLYS), 235 to 237 (CVR), Tyr241, 253 to 255 (VCS), and Thr294. NADP(+) contacts are provided by Ser217 and Arg237. NADP(+) contacts are provided by residues Thr294, 330 to 331 (VP), 360 to 361 (SR), 370 to 374 (RMYIQ), 399 to 400 (GL), and Glu438.

It belongs to the ferredoxin--NADP reductase type 1 family. FAD is required as a cofactor.

It is found in the cellular thylakoid membrane. The enzyme catalyses 2 reduced [2Fe-2S]-[ferredoxin] + NADP(+) + H(+) = 2 oxidized [2Fe-2S]-[ferredoxin] + NADPH. The sequence is that of Ferredoxin--NADP reductase (petH) from Nostoc sp. (strain ATCC 29151 / PCC 7119) (Anabaena sp.).